The primary structure comprises 419 residues: Zinc finger CCCH domain-containing protein 62 (419 aa).

The segment at 89–116 adopts a C3H1-type zinc-finger fold; that stretch reads SLRKWVCKYWKDGKCKRGEQCQFLHSWS. 5 WD repeats span residues 129–168, 210–247, 256–293, 296–335, and 383–419; these read GHNK…CVHS, GVVG…ESDP, GHSG…CIMT, QHTG…KVVQ, and FSTH…GNKV.

The chain is Zinc finger CCCH domain-containing protein 62 (ZFWD4) from Arabidopsis thaliana (Mouse-ear cress).